A 151-amino-acid chain; its full sequence is Transcription elongation factor GreA (151 aa).

A coiled-coil region spans residues 41-62 (AEYHAAREKQSFIEGRIKELEA).

Belongs to the GreA/GreB family.

In terms of biological role, necessary for efficient RNA polymerase transcription elongation past template-encoded arresting sites. The arresting sites in DNA have the property of trapping a certain fraction of elongating RNA polymerases that pass through, resulting in locked ternary complexes. Cleavage of the nascent transcript by cleavage factors such as GreA or GreB allows the resumption of elongation from the new 3'terminus. GreA releases sequences of 2 to 3 nucleotides. The protein is Transcription elongation factor GreA of Cereibacter sphaeroides (strain ATCC 17023 / DSM 158 / JCM 6121 / CCUG 31486 / LMG 2827 / NBRC 12203 / NCIMB 8253 / ATH 2.4.1.) (Rhodobacter sphaeroides).